The following is a 144-amino-acid chain: Large ribosomal subunit protein uL15 (144 aa).

Positions 1–48 (MIKLEYLQDPSPRKRRTKLLGRGPSSGHGKTSGRGHKGDGSRSGYKRR) are disordered.

The protein belongs to the universal ribosomal protein uL15 family. As to quaternary structure, part of the 50S ribosomal subunit.

Binds to the 23S rRNA. The polypeptide is Large ribosomal subunit protein uL15 (Chlamydia muridarum (strain MoPn / Nigg)).